We begin with the raw amino-acid sequence, 510 residues long: NAD(P)H-quinone oxidoreductase subunit 2 A, chloroplastic (510 aa).

Transmembrane regions (helical) follow at residues 31-51, 57-77, 99-119, 124-144, 149-169, 184-204, 229-249, 261-281, 295-315, 323-343, 354-374, 395-415, 418-438, and 484-504; these read LIFP…IDLT, IPWL…ALLF, IFQF…VEYI, MAIT…MFLC, LITI…LSGY, LLMG…LYGL, ISIA…LAPF, PTPV…ALAT, WHLL…LIAI, MLAY…IVGD, YMLF…LFGL, ALSL…AGFF, LYLF…IGLL, and MIVC…IIAI.

Belongs to the complex I subunit 2 family. As to quaternary structure, NDH is composed of at least 16 different subunits, 5 of which are encoded in the nucleus.

It is found in the plastid. The protein resides in the chloroplast thylakoid membrane. The catalysed reaction is a plastoquinone + NADH + (n+1) H(+)(in) = a plastoquinol + NAD(+) + n H(+)(out). It catalyses the reaction a plastoquinone + NADPH + (n+1) H(+)(in) = a plastoquinol + NADP(+) + n H(+)(out). Its function is as follows. NDH shuttles electrons from NAD(P)H:plastoquinone, via FMN and iron-sulfur (Fe-S) centers, to quinones in the photosynthetic chain and possibly in a chloroplast respiratory chain. The immediate electron acceptor for the enzyme in this species is believed to be plastoquinone. Couples the redox reaction to proton translocation, and thus conserves the redox energy in a proton gradient. This Nicotiana tabacum (Common tobacco) protein is NAD(P)H-quinone oxidoreductase subunit 2 A, chloroplastic.